The primary structure comprises 409 residues: Elongation factor Tu, plastid (409 aa).

The tr-type G domain maps to 10-214 (KPHINIGTIG…KIDSYIPTPI (205 aa)). Residues 19–26 (GHVDHGKT) form a G1 region. 19–26 (GHVDHGKT) contributes to the GTP binding site. Thr-26 contacts Mg(2+). A G2 region spans residues 60–64 (GITIN). The G3 stretch occupies residues 81 to 84 (DCPG). GTP-binding positions include 81 to 85 (DCPGH) and 136 to 139 (NKED). Residues 136-139 (NKED) form a G4 region. Residues 174-176 (SAL) form a G5 region.

The protein belongs to the TRAFAC class translation factor GTPase superfamily. Classic translation factor GTPase family. EF-Tu/EF-1A subfamily.

Its subcellular location is the plastid. The catalysed reaction is GTP + H2O = GDP + phosphate + H(+). GTP hydrolase that promotes the GTP-dependent binding of aminoacyl-tRNA to the A-site of ribosomes during protein biosynthesis. The polypeptide is Elongation factor Tu, plastid (tufA) (Euglena longa (Euglenophycean alga)).